The primary structure comprises 275 residues: Diaminopimelate epimerase (275 aa).

Substrate contacts are provided by asparagine 13, glutamine 46, and asparagine 66. Cysteine 75 serves as the catalytic Proton donor. Substrate-binding positions include 76 to 77 (GN), asparagine 159, asparagine 192, and 210 to 211 (ER). Cysteine 219 (proton acceptor) is an active-site residue. Residue 220 to 221 (GS) coordinates substrate.

Belongs to the diaminopimelate epimerase family. In terms of assembly, homodimer.

It is found in the cytoplasm. The enzyme catalyses (2S,6S)-2,6-diaminopimelate = meso-2,6-diaminopimelate. Its pathway is amino-acid biosynthesis; L-lysine biosynthesis via DAP pathway; DL-2,6-diaminopimelate from LL-2,6-diaminopimelate: step 1/1. Its function is as follows. Catalyzes the stereoinversion of LL-2,6-diaminopimelate (L,L-DAP) to meso-diaminopimelate (meso-DAP), a precursor of L-lysine and an essential component of the bacterial peptidoglycan. This is Diaminopimelate epimerase from Idiomarina loihiensis (strain ATCC BAA-735 / DSM 15497 / L2-TR).